The sequence spans 637 residues: Pentatricopeptide repeat-containing protein At1g12300, mitochondrial (637 aa).

The N-terminal 95 residues, 1 to 95 (MVKLMIRRLS…PTVIDFSRLF (95 aa)), are a transit peptide targeting the mitochondrion. PPR repeat units lie at residues 87 to 121 (TVID…GIAH), 122 to 156 (NLYT…GYEP), 157 to 191 (NTIT…GHKP), 192 to 226 (DLIT…GCQP), 227 to 261 (NAVT…NIKL), 262 to 296 (DAVK…GITT), 297 to 331 (NIIT…KINP), 332 to 366 (NVVT…GIAP), 367 to 401 (DTIT…GCDP), 402 to 436 (NIRT…GVVA), 437 to 471 (DTVT…KVPP), 472 to 506 (NIVT…KMEL), 507 to 541 (DIGI…GVKP), 542 to 576 (GVKT…GHAP), and 577 to 611 (DGWT…GFSV).

This sequence belongs to the PPR family. P subfamily.

The protein localises to the mitochondrion. This is Pentatricopeptide repeat-containing protein At1g12300, mitochondrial from Arabidopsis thaliana (Mouse-ear cress).